Consider the following 224-residue polypeptide: 25 kDa integral membrane protein (224 aa).

Topologically, residues 1-12 are cytoplasmic; the sequence is MKLSFTKVSLTN. Residues 13 to 33 traverse the membrane as a helical segment; the sequence is ILILFNCLFIIFSMIVLTFGV. The Extracellular segment spans residues 34-52; that stretch reads IPQIYLLKFANILHGVRPS. A helical membrane pass occupies residues 53 to 73; sequence IFPIVCFTGSFVIIVACVGII. The Cytoplasmic segment spans residues 74–80; that stretch reads GLMKGGK. Residues 81-101 form a helical membrane-spanning segment; that stretch reads CLLTMHIIALIIATIIDISTA. Residues 102-189 are Extracellular-facing; it reads TLSAIKQNEF…LNKYVRYYID (88 aa). Asn-120 carries N-linked (GlcNAc...) asparagine glycosylation. Residues 190-210 traverse the membrane as a helical segment; that stretch reads ILIYLCFIFGFIKLIYSLFTF. The Cytoplasmic portion of the chain corresponds to 211–224; that stretch reads TQRQRIFSEKTPVA.

This sequence belongs to the tetraspanin (TM4SF) family.

Its subcellular location is the membrane. This chain is 25 kDa integral membrane protein, found in Schistosoma japonicum (Blood fluke).